The sequence spans 504 residues: Maturase K (504 aa).

This sequence belongs to the intron maturase 2 family. MatK subfamily.

It is found in the plastid. Its subcellular location is the chloroplast. Its function is as follows. Usually encoded in the trnK tRNA gene intron. Probably assists in splicing its own and other chloroplast group II introns. This Vigna unguiculata (Cowpea) protein is Maturase K.